The primary structure comprises 381 residues: Ribosome assembly 1 protein (381 aa).

Met-1 carries the post-translational modification N-acetylmethionine. 3 disordered regions span residues 1-38 (MNYN…IKRQ), 164-216 (KDTF…DRDE), and 350-381 (FGSS…TRNK). At Ser-172 the chain carries Phosphoserine. Basic residues predominate over residues 359 to 371 (NHYKPNYKNRKPN).

It localises to the nucleus. Involved in a late nucleoplasmic step of 60S ribosomal subunit assembly. This chain is Ribosome assembly 1 protein (RSA1), found in Saccharomyces cerevisiae (strain ATCC 204508 / S288c) (Baker's yeast).